The primary structure comprises 128 residues: UPF0102 protein RPB_0420 (128 aa).

This sequence belongs to the UPF0102 family.

This is UPF0102 protein RPB_0420 from Rhodopseudomonas palustris (strain HaA2).